The primary structure comprises 194 residues: Ribonuclease HII (194 aa).

The region spanning 3–193 (ILTAGVDEAG…VRNLLAQQAL (191 aa)) is the RNase H type-2 domain. Asp9, Glu10, and Asp101 together coordinate a divalent metal cation.

This sequence belongs to the RNase HII family. It depends on Mn(2+) as a cofactor. The cofactor is Mg(2+).

It localises to the cytoplasm. It carries out the reaction Endonucleolytic cleavage to 5'-phosphomonoester.. Functionally, endonuclease that specifically degrades the RNA of RNA-DNA hybrids. In Neisseria meningitidis serogroup A / serotype 4A (strain DSM 15465 / Z2491), this protein is Ribonuclease HII (rnhB).